The chain runs to 182 residues: uncharacterized protein (182 aa).

2 disordered regions span residues 1-73 (MMSG…YRSL) and 105-182 (SMST…HLNR). Low complexity-rich tracts occupy residues 43–68 (RPSP…ETSS) and 105–121 (SMST…SPVT). Positions 122–131 (APAPPPPPTS) are enriched in pro residues.

This is an uncharacterized protein from Caenorhabditis elegans.